A 573-amino-acid polypeptide reads, in one-letter code: WRKY transcription factor SUSIBA2 (573 aa).

2 disordered regions span residues 56–133 (AHPD…CSRE) and 157–192 (PAEV…DDGY). The segment covering 64–85 (PRDKSVRNAHEDRGSRDFEFKP) has biased composition (basic and acidic residues). Over residues 108 to 122 (MQNQSMNPSSSSSNM) the composition is skewed to low complexity. The segment covering 163-182 (SEPQQMNSSDNAMQEPQSEN) has biased composition (polar residues). Residues 183 to 192 (VADKSADDGY) show a composition bias toward basic and acidic residues. A DNA-binding region (WRKY 1) is located at residues 183 to 247 (VADKSADDGY…YKGRHNHPKP (65 aa)). Zn(2+) contacts are provided by cysteine 214, cysteine 219, histidine 242, and histidine 244. Positions 240-332 (GRHNHPKPQP…EDLESKRRKM (93 aa)) are disordered. The span at 263 to 277 (GEERYDGASAADDKS) shows a compositional bias: basic and acidic residues. Residues 357–422 (SEVDILDDGY…YEGKHNHEVP (66 aa)) constitute a DNA-binding region (WRKY 2). Zn(2+) contacts are provided by cysteine 388, cysteine 393, histidine 417, and histidine 419.

Belongs to the WRKY group I family. In terms of tissue distribution, expressed in endosperm, but not in leaves.

The protein localises to the nucleus. Transcription factor involved in starch synthesis. Acts as a transcriptional activator in sugar signaling. Interacts specifically with the SURE and W-box elements, but not with the SP8a element. In Hordeum vulgare (Barley), this protein is WRKY transcription factor SUSIBA2.